We begin with the raw amino-acid sequence, 3414 residues long: Genome polyprotein (3414 aa).

The interval 1 to 30 is disordered; it reads MVKKAILKGKGGGPPRRVSKETATKTRQPR. Over 1-98 the chain is Cytoplasmic; it reads MVKKAILKGK…LQKRGKRRSA (98 aa). The propeptide at 97-117 is ER anchor for the capsid protein C, removed in mature form by serine protease NS3; sequence SATDWMSWLLVITLLGMTIAA. The helical transmembrane segment at 99–119 threads the bilayer; it reads TDWMSWLLVITLLGMTIAATV. Over 120-242 the chain is Extracellular; that stretch reads RKERDGSTVI…HLTRVEGWVW (123 aa). Residue Asn-144 is glycosylated (N-linked (GlcNAc...) asparagine; by host). Residues 243–260 traverse the membrane as a helical segment; the sequence is KNRLLALAMVTVVWLTLE. Ser-261 is a topological domain (cytoplasmic). The helical transmembrane segment at 262–280 threads the bilayer; it reads VVTRVAVLVVLLCLAPVYA. The Extracellular segment spans residues 281–727; it reads SRCTHLENRD…HTVLGGAFNS (447 aa). 6 disulfides stabilise this stretch: Cys-283-Cys-310, Cys-340-Cys-396, Cys-340-Cys-401, Cys-354-Cys-385, Cys-372-Cys-396, and Cys-372-Cys-401. Positions 378–391 are fusion peptide; sequence DRGWGNHCGLFGKG. Asn-434 is a glycosylation site (N-linked (GlcNAc...) asparagine; by host). 2 disulfide bridges follow: Cys-466/Cys-570 and Cys-587/Cys-618. Residues 728-748 form a helical membrane-spanning segment; sequence IFGGVGFLPKLLLGVALAWLG. Residues 749 to 755 lie on the Extracellular side of the membrane; it reads LNMRNPT. Residues 756–776 traverse the membrane as a helical segment; that stretch reads MSMSFLLAGVLVLAMTLGVGA. Residues 777–1132 lie on the Extracellular side of the membrane; it reads DVGCAVDTER…RSMVVADNGE (356 aa). Disulfide bonds link Cys-780-Cys-791, Cys-831-Cys-920, Cys-955-Cys-1000, Cys-1057-Cys-1106, Cys-1068-Cys-1090, and Cys-1089-Cys-1093. Residues Asn-861, Asn-983, and Asn-999 are each glycosylated (N-linked (GlcNAc...) asparagine; by host). A helical transmembrane segment spans residues 1133–1153; it reads LLSEGGVPGIVALFVVLEYII. Residues 1154–1158 are Cytoplasmic-facing; the sequence is RRRPS. Residues 1159 to 1179 form a helical membrane-spanning segment; sequence TGSTVVWGGIVVLALLVTGMV. Topologically, residues 1180–1187 are lumenal; sequence RMESLVRY. Residues 1188 to 1208 form a helical membrane-spanning segment; sequence VVAVGITFHLELGPEIVALML. Residues 1209 to 1293 are Cytoplasmic-facing; it reads LQAVFELRVG…LLMALMTQQD (85 aa). The helical transmembrane segment at 1294-1314 threads the bilayer; the sequence is VVTVHHGLVCFLSAASACSIW. The Lumenal segment spans residues 1315–1327; it reads RLLRGHREQKGLT. Residues 1328–1348 form a helical membrane-spanning segment; that stretch reads WIVPLARLLGGEGSGIRLLAF. Topologically, residues 1349–1359 are cytoplasmic; the sequence is WELSAHRGRRS. Residues 1360–1377 form a helical membrane-spanning segment; sequence FSEPLTVVGVMLTLASGM. Residues 1378–1382 are Lumenal-facing; the sequence is MRHTS. A helical transmembrane segment spans residues 1383–1403; sequence QEALCALAVASFLLLMLVLGT. Residues 1404–1454 lie on the Cytoplasmic side of the membrane; it reads RKMQLVAEWSGCVEWHPELVNEGGEVSLRVRQDAMGNFHLTELEKEERMMA. Positions 1410–1449 are interacts with and activates NS3 protease; it reads AEWSGCVEWHPELVNEGGEVSLRVRQDAMGNFHLTELEKE. The segment at residues 1455 to 1475 is an intramembrane region (helical); that stretch reads FWLIAGLAASAIHWSGIIGVM. At 1476–2160 the chain is on the cytoplasmic side; it reads GLWTLTKMLR…RMAERDAPEA (685 aa). Positions 1490-1669 constitute a Peptidase S7 domain; the sequence is SDLVFSGQGG…EAEKSRPNLP (180 aa). Residues His-1543, Asp-1567, and Ser-1627 each act as charge relay system; for serine protease NS3 activity in the active site. The region spanning 1675-1831 is the Helicase ATP-binding domain; sequence TGWTSKGQIT…ESNGAITSEE (157 aa). 1688–1695 is a binding site for ATP; it reads MHPGSGKT. A DEAH box motif is present at residues 1779-1782; sequence DEAH. The region spanning 1841–2000 is the Helicase C-terminal domain; the sequence is DGFDWITEYE…TLRGPVATFY (160 aa). N6-acetyllysine; by host is present on Lys-1883. The chain crosses the membrane as a helical span at residues 2161–2181; that stretch reads FLTMVEMMVLGLATLGVIWCF. Residues 2182–2189 lie on the Lumenal side of the membrane; that stretch reads VVRTSISR. Residues 2190–2210 constitute an intramembrane region (helical); sequence MMLGTLVLLASLLLLWAGGVG. Tyr-2211 is a topological domain (lumenal). A helical membrane pass occupies residues 2212–2232; sequence GNMAGVALIFYTLLTVLQPEA. The Cytoplasmic segment spans residues 2233-2244; sequence GKQRSSDDNKLA. The chain crosses the membrane as a helical span at residues 2245–2265; it reads YFLLTLCSLAGLVAANEMGFL. At 2266-2299 the chain is on the lumenal side; it reads EKTKADLSTVLWSEREEPRPWSEWTNVDIQPARS. Residues 2300 to 2320 constitute an intramembrane region (helical); sequence WGTYVLVVSLFTPYIIHQLQT. Residues 2321-2343 are Lumenal-facing; sequence KIQQLVNSAVASGAQAMRDLGGG. An intramembrane region (helical) is located at residues 2344–2364; it reads APFFGVAGHVMTLGVVSLIGA. The Lumenal portion of the chain corresponds to 2365–2368; the sequence is TPTS. Residues 2369-2389 form a helical membrane-spanning segment; sequence LMVGVGLAALHLAIVVSGLEA. Over 2390–2432 the chain is Cytoplasmic; sequence ELTQRAHKVFFSAMVRNPMVDGDVINPFGEGEAKPALYERRMS. A helical membrane pass occupies residues 2433–2453; it reads LVLAIVLCLMSVVMNRTVASI. Residues 2454-2477 are Lumenal-facing; that stretch reads TEASAVGLAAAGQLLRPEADTLWT. The helical transmembrane segment at 2478–2498 threads the bilayer; that stretch reads MPVACGMSGVVRGSLWGFLPL. At 2499 to 3414 the chain is on the cytoplasmic side; the sequence is GHRLWLRASG…WELRLESSII (916 aa). Residues 2512-2776 form the mRNA cap 0-1 NS5-type MT domain; it reads GGSEGDTLGD…ELDLGVGTRC (265 aa). Ser-2567 provides a ligand contact to S-adenosyl-L-methionine. Phosphoserine is present on Ser-2567. The active-site For 2'-O-MTase activity is Lys-2572. S-adenosyl-L-methionine-binding residues include Gly-2597, Trp-2598, Thr-2615, Ile-2616, Asp-2642, and Val-2643. Catalysis depends on Asp-2657, which acts as the For 2'-O-MTase activity. Position 2658 (Ile-2658) interacts with S-adenosyl-L-methionine. Residues Lys-2694 and Glu-2730 each act as for 2'-O-MTase activity in the active site. The interval 2730 to 2734 is interaction with host SCRIB; it reads EMYYS. Tyr-2732 is a binding site for S-adenosyl-L-methionine. Residues Glu-2950, His-2954, Cys-2959, and Cys-2962 each coordinate Zn(2+). One can recognise a RdRp catalytic domain in the interval 3040–3189; it reads GLFYADDTAG…RPLDDRFGKA (150 aa). His-3224, Cys-3240, and Cys-3359 together coordinate Zn(2+).

It in the N-terminal section; belongs to the class I-like SAM-binding methyltransferase superfamily. mRNA cap 0-1 NS5-type methyltransferase family. In terms of assembly, homodimer. Interacts (via N-terminus) with host EXOC1 (via C-terminus); this interaction results in EXOC1 degradation through the proteasome degradation pathway. As to quaternary structure, forms heterodimers with envelope protein E in the endoplasmic reticulum and Golgi. Homodimer; in the endoplasmic reticulum and Golgi. Interacts with protein prM. Interacts with non-structural protein 1. In terms of assembly, homodimer; Homohexamer when secreted. Interacts with envelope protein E. As to quaternary structure, interacts (via N-terminus) with serine protease NS3. Forms a heterodimer with serine protease NS3. May form homooligomers. In terms of assembly, forms a heterodimer with NS2B. Interacts with NS4B. Interacts with unphosphorylated RNA-directed RNA polymerase NS5; this interaction stimulates RNA-directed RNA polymerase NS5 guanylyltransferase activity. As to quaternary structure, interacts with serine protease NS3. Homodimer. Interacts with host STAT2; this interaction inhibits the phosphorylation of the latter, and, when all viral proteins are present (polyprotein), targets STAT2 for degradation. Interacts with serine protease NS3. Interacts with host SCRIB; this interaction targets NS5 to the cell membrane periphery and nucleus, thereby allowing efficient host nuclear STAT1 inhibition. Post-translationally, specific enzymatic cleavages in vivo yield mature proteins. Cleavages in the lumen of endoplasmic reticulum are performed by host signal peptidase, whereas cleavages in the cytoplasmic side are performed by serine protease NS3. Signal cleavage at the 2K-4B site requires a prior NS3 protease-mediated cleavage at the 4A-2K site. In terms of processing, cleaved in post-Golgi vesicles by a host furin, releasing the mature small envelope protein M, and peptide pr. This cleavage is incomplete as up to 30% of viral particles still carry uncleaved prM. N-glycosylated. Post-translationally, N-glycosylated. The excreted form is glycosylated and this is required for efficient secretion of the protein from infected cells. In terms of processing, acetylated by host KAT5. Acetylation modulates NS3 RNA-binding and unwinding activities and plays an important positive role for viral replication. Phosphorylated on serines residues. This phosphorylation may trigger NS5 nuclear localization.

The protein resides in the virion. It localises to the host nucleus. The protein localises to the host cytoplasm. Its subcellular location is the host perinuclear region. It is found in the secreted. The protein resides in the virion membrane. It localises to the host endoplasmic reticulum membrane. It catalyses the reaction Selective hydrolysis of -Xaa-Xaa-|-Yaa- bonds in which each of the Xaa can be either Arg or Lys and Yaa can be either Ser or Ala.. It carries out the reaction RNA(n) + a ribonucleoside 5'-triphosphate = RNA(n+1) + diphosphate. The catalysed reaction is a ribonucleoside 5'-triphosphate + H2O = a ribonucleoside 5'-diphosphate + phosphate + H(+). The enzyme catalyses ATP + H2O = ADP + phosphate + H(+). It catalyses the reaction a 5'-end (5'-triphosphoguanosine)-ribonucleoside in mRNA + S-adenosyl-L-methionine = a 5'-end (N(7)-methyl 5'-triphosphoguanosine)-ribonucleoside in mRNA + S-adenosyl-L-homocysteine. It carries out the reaction a 5'-end (N(7)-methyl 5'-triphosphoguanosine)-ribonucleoside in mRNA + S-adenosyl-L-methionine = a 5'-end (N(7)-methyl 5'-triphosphoguanosine)-(2'-O-methyl-ribonucleoside) in mRNA + S-adenosyl-L-homocysteine + H(+). Functionally, plays a role in virus budding by binding to the cell membrane and gathering the viral RNA into a nucleocapsid that forms the core of a mature virus particle. During virus entry, may induce genome penetration into the host cytoplasm after hemifusion induced by the surface proteins. Can migrate to the cell nucleus where it modulates host functions. Inhibits RNA silencing by interfering with host Dicer. In terms of biological role, prevents premature fusion activity of envelope proteins in trans-Golgi by binding to envelope protein E at pH6.0. After virion release in extracellular space, gets dissociated from E dimers. Its function is as follows. Acts as a chaperone for envelope protein E during intracellular virion assembly by masking and inactivating envelope protein E fusion peptide. prM is the only viral peptide matured by host furin in the trans-Golgi network probably to avoid catastrophic activation of the viral fusion activity in acidic Golgi compartment prior to virion release. prM-E cleavage is inefficient, and many virions are only partially matured. These uncleaved prM would play a role in immune evasion. Functionally, may play a role in virus budding. Exerts cytotoxic effects by activating a mitochondrial apoptotic pathway through M ectodomain. May display a viroporin activity. Binds to host cell surface receptor and mediates fusion between viral and cellular membranes. Envelope protein is synthesized in the endoplasmic reticulum in the form of heterodimer with protein prM. They play a role in virion budding in the ER, and the newly formed immature particle is covered with 60 spikes composed of heterodimer between precursor prM and envelope protein E. The virion is transported to the Golgi apparatus where the low pH causes dissociation of PrM-E heterodimers and formation of E homodimers. prM-E cleavage is inefficient, and many virions are only partially matured. These uncleaved prM would play a role in immune evasion. In terms of biological role, involved in immune evasion, pathogenesis and viral replication. Once cleaved off the polyprotein, is targeted to three destinations: the viral replication cycle, the plasma membrane and the extracellular compartment. Essential for viral replication. Required for formation of the replication complex and recruitment of other non-structural proteins to the ER-derived membrane structures. Excreted as a hexameric lipoparticle that plays a role against host immune response. Antagonizing the complement function. Binds to the host macrophages and dendritic cells. Inhibits signal transduction originating from Toll-like receptor 3 (TLR3). Its function is as follows. Component of the viral RNA replication complex that functions in virion assembly and antagonizes the host immune response. Functionally, required cofactor for the serine protease function of NS3. May have membrane-destabilizing activity and form viroporins. Displays three enzymatic activities: serine protease, NTPase and RNA helicase. NS3 serine protease, in association with NS2B, performs its autocleavage and cleaves the polyprotein at dibasic sites in the cytoplasm: C-prM, NS2A-NS2B, NS2B-NS3, NS3-NS4A, NS4A-2K and NS4B-NS5. NS3 RNA helicase binds RNA and unwinds dsRNA in the 3' to 5' direction. In terms of biological role, regulates the ATPase activity of the NS3 helicase activity. NS4A allows NS3 helicase to conserve energy during unwinding. Its function is as follows. Functions as a signal peptide for NS4B and is required for the interferon antagonism activity of the latter. Functionally, induces the formation of ER-derived membrane vesicles where the viral replication takes place. Inhibits interferon (IFN)-induced host STAT1 phosphorylation and nuclear translocation, thereby preventing the establishment of cellular antiviral state by blocking the IFN-alpha/beta pathway. Inhibits STAT2 translocation in the nucleus after IFN-alpha treatment. Replicates the viral (+) and (-) genome, and performs the capping of genomes in the cytoplasm. NS5 methylates viral RNA cap at guanine N-7 and ribose 2'-O positions. Besides its role in genome replication, also prevents the establishment of cellular antiviral state by blocking the interferon-alpha/beta (IFN-alpha/beta) signaling pathway. Inhibits host TYK2 and STAT2 phosphorylation, thereby preventing activation of JAK-STAT signaling pathway. The protein is Genome polyprotein of Tick-borne encephalitis virus (strain Hypr) (TBEV).